Consider the following 224-residue polypeptide: Thiamine-phosphate synthase (224 aa).

Residues 44-48 (QFREK) and Asn-79 each bind 4-amino-2-methyl-5-(diphosphooxymethyl)pyrimidine. Mg(2+)-binding residues include Asp-80 and Asp-99. Ser-117 serves as a coordination point for 4-amino-2-methyl-5-(diphosphooxymethyl)pyrimidine. 2-[(2R,5Z)-2-carboxy-4-methylthiazol-5(2H)-ylidene]ethyl phosphate is bound at residue 143-145 (TET). Residue Lys-146 participates in 4-amino-2-methyl-5-(diphosphooxymethyl)pyrimidine binding. 2-[(2R,5Z)-2-carboxy-4-methylthiazol-5(2H)-ylidene]ethyl phosphate is bound by residues Gly-175 and 195–196 (IS).

It belongs to the thiamine-phosphate synthase family. Mg(2+) is required as a cofactor.

The enzyme catalyses 2-[(2R,5Z)-2-carboxy-4-methylthiazol-5(2H)-ylidene]ethyl phosphate + 4-amino-2-methyl-5-(diphosphooxymethyl)pyrimidine + 2 H(+) = thiamine phosphate + CO2 + diphosphate. It carries out the reaction 2-(2-carboxy-4-methylthiazol-5-yl)ethyl phosphate + 4-amino-2-methyl-5-(diphosphooxymethyl)pyrimidine + 2 H(+) = thiamine phosphate + CO2 + diphosphate. It catalyses the reaction 4-methyl-5-(2-phosphooxyethyl)-thiazole + 4-amino-2-methyl-5-(diphosphooxymethyl)pyrimidine + H(+) = thiamine phosphate + diphosphate. The protein operates within cofactor biosynthesis; thiamine diphosphate biosynthesis; thiamine phosphate from 4-amino-2-methyl-5-diphosphomethylpyrimidine and 4-methyl-5-(2-phosphoethyl)-thiazole: step 1/1. In terms of biological role, condenses 4-methyl-5-(beta-hydroxyethyl)thiazole monophosphate (THZ-P) and 2-methyl-4-amino-5-hydroxymethyl pyrimidine pyrophosphate (HMP-PP) to form thiamine monophosphate (TMP). This is Thiamine-phosphate synthase from Bacillus velezensis (strain DSM 23117 / BGSC 10A6 / LMG 26770 / FZB42) (Bacillus amyloliquefaciens subsp. plantarum).